Consider the following 345-residue polypeptide: MNEPTVSETLNSQKPIVFSGAQPSGELTIGNYMGALRQWVKMQDDYDCIYCIVDQHAITVRQDPKELRKRTLDTLALYLACGIDPEKSTIFVQSHVPQHAQLSWILNCYTYFGELSRMTQFKDKSARHAENINAGLFDYPVLMTADILVYQTNQVPVGIDQKQHLELSRDIAQRFNAIYGNIFAVPEPFIPTGGARVMALQDPEKKMSKSDDNRNNVIALLEDPKSAAKKIKRAVTDSEEPPRVRYDLEQKPGVSNLLDLLAGVTGKTIPELEAEFEGQMYGHLKSAVADAVSGMLTELQERFHYFRNDEILLNKIMAEGAAKAKARAQITLDKVYEAVGFIAHP.

Residues 22–24 (QPS) and 30–31 (GN) contribute to the ATP site. Residues 23-31 (PSGELTIGN) carry the 'HIGH' region motif. Aspartate 146 contacts L-tryptophan. Residues 158–160 (GID), valine 197, and 206–210 (KMSKS) contribute to the ATP site. The short motif at 206-210 (KMSKS) is the 'KMSKS' region element.

This sequence belongs to the class-I aminoacyl-tRNA synthetase family. Homodimer.

The protein resides in the cytoplasm. The catalysed reaction is tRNA(Trp) + L-tryptophan + ATP = L-tryptophyl-tRNA(Trp) + AMP + diphosphate + H(+). In terms of biological role, catalyzes the attachment of tryptophan to tRNA(Trp). The sequence is that of Tryptophan--tRNA ligase from Photorhabdus laumondii subsp. laumondii (strain DSM 15139 / CIP 105565 / TT01) (Photorhabdus luminescens subsp. laumondii).